A 387-amino-acid chain; its full sequence is Chaperone protein DnaJ (387 aa).

The J domain occupies 5-70 (DYYEVLGLQK…DKKAKYDQFG (66 aa)). Residues 144-226 (GCEKEISITR…CKGKGTVRKN (83 aa)) form a CR-type zinc finger. Residues Cys-157, Cys-160, Cys-174, Cys-177, Cys-200, Cys-203, Cys-214, and Cys-217 each coordinate Zn(2+). 4 CXXCXGXG motif repeats span residues 157-164 (CETCHGTG), 174-181 (CPKCNGSG), 200-207 (CDQCGGTG), and 214-221 (CPDCKGKG).

Belongs to the DnaJ family. As to quaternary structure, homodimer. Requires Zn(2+) as cofactor.

Its subcellular location is the cytoplasm. In terms of biological role, participates actively in the response to hyperosmotic and heat shock by preventing the aggregation of stress-denatured proteins and by disaggregating proteins, also in an autonomous, DnaK-independent fashion. Unfolded proteins bind initially to DnaJ; upon interaction with the DnaJ-bound protein, DnaK hydrolyzes its bound ATP, resulting in the formation of a stable complex. GrpE releases ADP from DnaK; ATP binding to DnaK triggers the release of the substrate protein, thus completing the reaction cycle. Several rounds of ATP-dependent interactions between DnaJ, DnaK and GrpE are required for fully efficient folding. Also involved, together with DnaK and GrpE, in the DNA replication of plasmids through activation of initiation proteins. The chain is Chaperone protein DnaJ from Clostridium perfringens (strain 13 / Type A).